The sequence spans 687 residues: Adhesion G-protein coupled receptor G1 (687 aa).

The first 25 residues, 1 to 25 (MTAQSLLQMTLFLLSLLFLVQGAHG), serve as a signal peptide directing secretion. 26–33 (RGHREDFR) lines the heparin pocket. At 26 to 402 (RGHREDFRFC…VEVDAVHKHY (377 aa)) the chain is on the extracellular side. 2 disulfide bridges follow: cysteine 35–cysteine 91 and cysteine 121–cysteine 177. Asparagine 39, asparagine 148, and asparagine 171 each carry an N-linked (GlcNAc...) asparagine glycan. Heparin is bound at residue 190-200 (LKHPQKASRRP). The 172-residue stretch at 224 to 395 (DTVSFEEDRI…AVLMVSSVEV (172 aa)) folds into the GAIN-B domain. N-linked (GlcNAc...) asparagine glycosylation is found at asparagine 234, asparagine 303, asparagine 324, and asparagine 341. Intrachain disulfides connect cysteine 346–cysteine 377 and cysteine 366–cysteine 379. The GPS stretch occupies residues 346 to 395 (CVFWVEDPTLSSPGHWSSAGCETVRRETQTSCFCNHLTYFAVLMVSSVEV). The interval 384-397 (YFAVLMVSSVEVDA) is stachel. A helical membrane pass occupies residues 403–423 (LSLLSYVGCVISALACVVTIA). The Cytoplasmic segment spans residues 424–442 (AYLCSRRKPRDYTIKVHMN). The helical transmembrane segment at 443 to 463 (LLLAVFLLDMSFLLSEPVALT) threads the bilayer. The Extracellular segment spans residues 464–470 (GSEAGCR). The helical transmembrane segment at 471–491 (AGAIFLHFSLLACLSWMGLEG) threads the bilayer. Over 492 to 512 (YNLYRLVVEVFGTYVPGYLLK) the chain is Cytoplasmic. A helical transmembrane segment spans residues 513–533 (LSAMGWGFPIFLVTLVALVDV). Residues 534 to 570 (DNYGPIILAVHRTPESVIYPSMCWIRDSLVSYVTNLG) are Extracellular-facing. Residues 571-591 (LFSLVFLFNMAMLGTMVVQIL) form a helical membrane-spanning segment. The Cytoplasmic portion of the chain corresponds to 592–603 (RLRPHTQKWSHV). Residues 604–624 (LTLLGLSLVLGLPWALIFFSF) form a helical membrane-spanning segment. Topologically, residues 625–630 (ASGTFQ) are extracellular. The helical transmembrane segment at 631 to 651 (LVVLYLFSIITSFQGFLIFIW) threads the bilayer. At 652-687 (YWSMRLQARGGPSPLKSNSDSARLPISSGSTSSSRI) the chain is on the cytoplasmic side. Residues 664–687 (SPLKSNSDSARLPISSGSTSSSRI) form a disordered region. A compositionally biased stretch (low complexity) spans 678 to 687 (SSGSTSSSRI).

It belongs to the G-protein coupled receptor 2 family. LN-TM7 subfamily. In terms of assembly, heterodimer of 2 chains generated by proteolytic processing; the large extracellular N-terminal fragment (ADGRG1 NT) and the membrane-bound C-terminal fragment (ADGRG1-CT) predominantly remain associated and non-covalently linked. ADGRG1 NT self-associates in a trans-trans manner; the homophilic interaction enhances receptor signaling. Interacts with TGM2. Interacts with heparin; leading to the reduction of ADGRG1 shedding. Interacts with COL3A1. Part of a GPCR-tetraspanin complex at least consisting of ADGRG1, CD81, eventually CD9, and GNA11 in which CD81 is enhancing the association of ADGRG1 with GNA11. In terms of processing, autoproteolytically cleaved into 2 fragments; the large extracellular N-terminal fragment (ADGRG1 NT) and the membrane-bound C-terminal fragment (ADGRG1 CT) predominantly remain associated and non-covalently linked. Shedding to yield the secreted ADGRG1 N-terminal fragment seems to involve metalloprotease(s). Post-translationally, ubiquitinated. Undergoes polyubiquitination upon activation.

Its subcellular location is the cell membrane. It is found in the secreted. The protein resides in the membrane raft. With respect to regulation, forms a heterodimer of 2 chains generated by proteolytic processing that remain associated through non-covalent interactions mediated by the GAIN-B domain. In the inactivated receptor, the Stachel sequence (also named stalk) is embedded in the GAIN-B domain, where it adopts a beta-strand conformation. On activation, the Stachel moves into the 7 transmembrane region and adopts a twisted hook-shaped configuration that forms contacts within the receptor, leading to coupling of a G-alpha protein, which activates signaling. The cleaved GAIN-B and N-terminal domains can then dissociate from the rest of the receptor. Adhesion G-protein coupled receptor (aGPCR) for steroid hormone 17alpha-hydroxypregnenolone (17-OH), which is involved in cell adhesion and cell-cell interactions. Ligand binding causes a conformation change that triggers signaling via guanine nucleotide-binding proteins (G proteins) and modulates the activity of downstream effectors, such as RhoA pathway. ADGRG1 is coupled to G(12) and/or G(13) G proteins (GNA12 and GNA13, respectively) and mediates the activation Rho small GTPases. Acts as a potent suppressor of ferroptosis: binding to 17-OH-binding initiates signaling that down-regulates CD36 and alleviates ferroptosis-induced liver injury. Ligand-binding also induces cell adhesion activity via association with proteins such as collagen III/COL3A1 and TGM2. Mediates cell matrix adhesion in developing neurons and hematopoietic stem cells. Involved in cortical development, specifically in maintenance of the pial basement membrane integrity and in cortical lamination: association with COL3A1 in the developing brain inhibits neuronal migration via activation of the RhoA pathway. Together with TGM2, acts as a regulator of myelination and myelin repair in oligodendrocyte precursor cells. Acts as a hemostatic sensor of shear force: G protein-coupled receptor signaling is activated in response to shear force in platelets, promoting G(13) G protein signaling, and platelet shape change and aggregation in a COL3A1-dependent manner. Acts as an inhibitor of VEGFA production thereby inhibiting angiogenesis through a signaling pathway mediated by PRKCA. Plays a role in the maintenance of hematopoietic stem cells in bone marrow niche. Plays an essential role in testis development. This chain is Adhesion G-protein coupled receptor G1 (ADGRG1), found in Pongo pygmaeus (Bornean orangutan).